A 316-amino-acid polypeptide reads, in one-letter code: DNA-directed RNA polymerase subunit alpha (316 aa).

The tract at residues 1–230 is alpha N-terminal domain (alpha-NTD); sequence MIEFEKPNIH…EHLAMFVDLT (230 aa). The interval 247–316 is alpha C-terminal domain (alpha-CTD); that stretch reads KEKMLEMTIE…DLGLSLRKED (70 aa).

The protein belongs to the RNA polymerase alpha chain family. Homodimer. The RNAP catalytic core consists of 2 alpha, 1 beta, 1 beta' and 1 omega subunit. When a sigma factor is associated with the core the holoenzyme is formed, which can initiate transcription.

The catalysed reaction is RNA(n) + a ribonucleoside 5'-triphosphate = RNA(n+1) + diphosphate. Functionally, DNA-dependent RNA polymerase catalyzes the transcription of DNA into RNA using the four ribonucleoside triphosphates as substrates. The sequence is that of DNA-directed RNA polymerase subunit alpha from Levilactobacillus brevis (strain ATCC 367 / BCRC 12310 / CIP 105137 / JCM 1170 / LMG 11437 / NCIMB 947 / NCTC 947) (Lactobacillus brevis).